The primary structure comprises 92 residues: Putative septation protein SpoVG (92 aa).

It belongs to the SpoVG family.

Functionally, could be involved in septation. The chain is Putative septation protein SpoVG from Thermoanaerobacter sp. (strain X514).